Consider the following 546-residue polypeptide: Casein kinase I homolog 2 (546 aa).

2 stretches are compositionally biased toward polar residues: residues 1–33 (MSQV…SNVR) and 44–55 (HVSSNLNHNTGN). A disordered region spans residues 1-67 (MSQVQSPLTA…ASYSGSQSRD (67 aa)). Ser2 carries the post-translational modification N-acetylserine. In terms of domain architecture, Protein kinase spans 76 to 360 (YKIGKKIGEG…ETADGQYDWM (285 aa)). ATP contacts are provided by residues 82-90 (IGEGSFGVL) and Lys105. The Proton acceptor role is filled by Asp195. Disordered regions lie at residues 373–425 (NKKP…QAQA) and 443–546 (QQAN…LGCC). Low complexity predominate over residues 412 to 425 (QQQQQQQAQAQAQA). Positions 453 to 465 (DDSHYDEEREASK) are enriched in basic and acidic residues. A Phosphoserine modification is found at Ser455. Lys465 is covalently cross-linked (Glycyl lysine isopeptide (Lys-Gly) (interchain with G-Cter in ubiquitin)). The segment covering 475 to 496 (QQQTQQKYAQQQQKQMQQKSKQ) has biased composition (low complexity). Positions 497–530 (FANTGANGQTNKYPYNAQPTANDEQNAKNAAQDR) are enriched in polar residues. The segment covering 533–546 (NKSSKGFFSKLGCC) has biased composition (low complexity). Residues Cys545 and Cys546 are each lipidated (S-palmitoyl cysteine).

It belongs to the protein kinase superfamily. CK1 Ser/Thr protein kinase family. Casein kinase I subfamily. Post-translationally, palmitoylated by AKR1, which is required for proper plasma membrane localization of YCK2.

It localises to the cell membrane. The catalysed reaction is L-seryl-[protein] + ATP = O-phospho-L-seryl-[protein] + ADP + H(+). It carries out the reaction L-threonyl-[protein] + ATP = O-phospho-L-threonyl-[protein] + ADP + H(+). Functionally, casein kinases are operationally defined by their preferential utilization of acidic proteins such as caseins as substrates. The sequence is that of Casein kinase I homolog 2 (YCK2) from Saccharomyces cerevisiae (strain ATCC 204508 / S288c) (Baker's yeast).